Consider the following 402-residue polypeptide: NADH-quinone oxidoreductase subunit D (402 aa).

The protein belongs to the complex I 49 kDa subunit family. In terms of assembly, NDH-1 is composed of 14 different subunits. Subunits NuoB, C, D, E, F, and G constitute the peripheral sector of the complex.

It is found in the cell inner membrane. It catalyses the reaction a quinone + NADH + 5 H(+)(in) = a quinol + NAD(+) + 4 H(+)(out). Its function is as follows. NDH-1 shuttles electrons from NADH, via FMN and iron-sulfur (Fe-S) centers, to quinones in the respiratory chain. The immediate electron acceptor for the enzyme in this species is believed to be ubiquinone. Couples the redox reaction to proton translocation (for every two electrons transferred, four hydrogen ions are translocated across the cytoplasmic membrane), and thus conserves the redox energy in a proton gradient. The polypeptide is NADH-quinone oxidoreductase subunit D (Azorhizobium caulinodans (strain ATCC 43989 / DSM 5975 / JCM 20966 / LMG 6465 / NBRC 14845 / NCIMB 13405 / ORS 571)).